Here is an 87-residue protein sequence, read N- to C-terminus: Keratin-associated protein 19-1 (87 aa).

The tract at residues 6–72 is 21 X 2 AA repeats of G-[YCGS]; that stretch reads GYSGGLGYGY…SSYGGYGCGC (67 aa).

Belongs to the KRTAP type 19 family. As to quaternary structure, interacts with hair keratins. As to expression, strong expression in narrowly defined pattern restricted to the lower and middle cortical regions of the hair shaft in both developing and cycling hair. During hair follicle regression (catagen), expression levels decrease until expression is no longer detectable in follicles at resting stage (telogen).

Its function is as follows. In the hair cortex, hair keratin intermediate filaments are embedded in an interfilamentous matrix, consisting of hair keratin-associated proteins (KRTAP), which are essential for the formation of a rigid and resistant hair shaft through their extensive disulfide bond cross-linking with abundant cysteine residues of hair keratins. The matrix proteins include the high-sulfur and high-glycine-tyrosine keratins. This Mus musculus (Mouse) protein is Keratin-associated protein 19-1 (Krtap19-1).